An 802-amino-acid chain; its full sequence is Phenylalanine--tRNA ligase beta subunit (802 aa).

One can recognise a tRNA-binding domain in the interval 40–149 (RPELDFVKIV…EGAEIGKTIR (110 aa)). Positions 407 to 484 (HKEVRIHTDI…RTRGYDTIQV (78 aa)) constitute a B5 domain. Mg(2+) is bound by residues Asp-462, Asp-468, Glu-471, and Glu-472. The 93-residue stretch at 710-802 (SQFPEAEIDI…LAGKNGFVLR (93 aa)) folds into the FDX-ACB domain.

This sequence belongs to the phenylalanyl-tRNA synthetase beta subunit family. Type 1 subfamily. Tetramer of two alpha and two beta subunits. Mg(2+) is required as a cofactor.

It localises to the cytoplasm. It carries out the reaction tRNA(Phe) + L-phenylalanine + ATP = L-phenylalanyl-tRNA(Phe) + AMP + diphosphate + H(+). The protein is Phenylalanine--tRNA ligase beta subunit of Leptospira borgpetersenii serovar Hardjo-bovis (strain L550).